A 164-amino-acid chain; its full sequence is R-phycoerythrin alpha chain (164 aa).

(2R,3E)-phycoerythrobilin contacts are provided by Cys82 and Cys139.

The protein belongs to the phycobiliprotein family. In terms of assembly, heterodimer of an alpha and a beta chain. Contains two covalently linked bilin chromophores.

It localises to the plastid. Its subcellular location is the chloroplast thylakoid membrane. Its function is as follows. Light-harvesting photosynthetic bile pigment-protein from the phycobiliprotein complex. The chain is R-phycoerythrin alpha chain (cpeA) from Lophosiphonia boldii (Red alga).